A 154-amino-acid chain; its full sequence is Egg-lysin (154 aa).

A signal peptide spans 1–18 (MKLLVLWVFAMMATVAMS).

Monomer. Homodimer. Molecules associate into dimers and then rapidly dissociate again. Interacts (as a monomer) with the egg vitelline layer protein VERL (via VERL repeats); each VERL chain can bind multiple copies of lysin. As to expression, sperm.

Its subcellular location is the cytoplasmic vesicle. The protein localises to the secretory vesicle. It localises to the acrosome lumen. Functionally, creates a 3 um hole in the egg vitelline layer through which the sperm passes. Does not have enzyme activity. Species-specific interaction between the sperm protein lysin and the egg protein VERL exposes a basic surface on lysin that may dissociate the egg vitelline layer via electrostatic repulsion. Plays a role in ensuring species-specific fertilization. This Haliotis fulgens (Green abalone) protein is Egg-lysin.